The primary structure comprises 144 residues: Maximins 11/H11 (144 aa).

The signal sequence occupies residues 1 to 18 (MNFKYIVAVSFLIASAYA). Residues 19 to 43 (RSEENDEQSLSQRDVLEEESLREIR) constitute a propeptide that is removed on maturation. Position 70 is an asparagine amide (Asn70). Residues 74–123 (TAEDHEVMKRLEAVMRDLDSLDYPEEASERETRGFNQEEIANLFTKKEKR) constitute a propeptide that is removed on maturation. An Isoleucine amide modification is found at Ile143.

The protein belongs to the bombinin family. Expressed by the skin glands.

The protein localises to the secreted. Its function is as follows. Maximin-11 shows antimicrobial activity against bacteria and against the fungus C.albicans. It has little hemolytic activity. Maximin-H11 shows antimicrobial activity against bacteria and against the fungus C.albicans. Shows strong hemolytic activity. The polypeptide is Maximins 11/H11 (Bombina maxima (Giant fire-bellied toad)).